The following is a 1388-amino-acid chain: Putative ATP-dependent RNA helicase DHX57 (1388 aa).

Over residues 1–11 (MSSSVRRKGKP) the composition is skewed to basic residues. Disordered regions lie at residues 1–107 (MSSS…MTSE) and 121–154 (EQGA…AGQE). Over residues 34–51 (HGGGGGGGGSCGGGGGGS) the composition is skewed to gly residues. Residues 79–89 (DSNKSKGETRP) show a composition bias toward basic and acidic residues. 2 positions are modified to phosphoserine: serine 128 and serine 133. Residues 175–220 (PVPECAVSPLAVQKLSRYGFHTEHCQLALRICDGDLGAALEHLLRQ) form the UBA domain. The C3H1-type zinc finger occupies 299 to 326 (DTSPETCKFYLKGNCKFGSKCKFKHEVP). The residue at position 475 (serine 475) is a Phosphoserine. The Helicase ATP-binding domain occupies 555-722 (LKLLSKHQVV…FSYCPVITIP (168 aa)). Position 568–575 (568–575 (GMTGCGKT)) interacts with ATP. Positions 669–672 (DEVH) match the DEVH box motif. The Helicase C-terminal domain occupies 832–1012 (LIEALLEWIV…QLCLRIKILE (181 aa)).

It belongs to the DEAD box helicase family. DEAH subfamily.

The catalysed reaction is ATP + H2O = ADP + phosphate + H(+). Probable ATP-binding RNA helicase. The protein is Putative ATP-dependent RNA helicase DHX57 (Dhx57) of Mus musculus (Mouse).